Here is a 34-residue protein sequence, read N- to C-terminus: METVLSAPEVFIALVVAAHAAVLALRLSISLYEA.

A helical transmembrane segment spans residues 4–24 (VLSAPEVFIALVVAAHAAVLA).

It belongs to the PsaM family.

Its subcellular location is the cellular thylakoid membrane. The protein is Photosystem I reaction center subunit XII of Synechococcus sp. (strain CC9605).